Here is a 329-residue protein sequence, read N- to C-terminus: 7,8-didemethyl-8-hydroxy-5-deazariboflavin synthase (329 aa).

Positions 1-235 constitute a Radical SAM core domain; the sequence is MFIPVTNICR…SDVSVQVAPN (235 aa). [4Fe-4S] cluster is bound by residues cysteine 9, cysteine 13, and cysteine 16.

It belongs to the radical SAM superfamily. CofG family. Consists of two subunits, CofG and CofH. [4Fe-4S] cluster serves as cofactor.

The enzyme catalyses 5-amino-5-(4-hydroxybenzyl)-6-(D-ribitylimino)-5,6-dihydrouracil + S-adenosyl-L-methionine = 7,8-didemethyl-8-hydroxy-5-deazariboflavin + 5'-deoxyadenosine + L-methionine + NH4(+) + H(+). It functions in the pathway cofactor biosynthesis; coenzyme F0 biosynthesis. Catalyzes the radical-mediated synthesis of 7,8-didemethyl-8-hydroxy-5-deazariboflavin from 5-amino-5-(4-hydroxybenzyl)-6-(D-ribitylimino)-5,6-dihydrouracil. The polypeptide is 7,8-didemethyl-8-hydroxy-5-deazariboflavin synthase (Methanosarcina acetivorans (strain ATCC 35395 / DSM 2834 / JCM 12185 / C2A)).